The primary structure comprises 179 residues: Large ribosomal subunit protein uL5 (179 aa).

Belongs to the universal ribosomal protein uL5 family. In terms of assembly, part of the 50S ribosomal subunit; part of the 5S rRNA/L5/L18/L25 subcomplex. Contacts the 5S rRNA and the P site tRNA. Forms a bridge to the 30S subunit in the 70S ribosome.

Its function is as follows. This is one of the proteins that bind and probably mediate the attachment of the 5S RNA into the large ribosomal subunit, where it forms part of the central protuberance. In the 70S ribosome it contacts protein S13 of the 30S subunit (bridge B1b), connecting the 2 subunits; this bridge is implicated in subunit movement. Contacts the P site tRNA; the 5S rRNA and some of its associated proteins might help stabilize positioning of ribosome-bound tRNAs. This is Large ribosomal subunit protein uL5 from Cronobacter sakazakii (strain ATCC BAA-894) (Enterobacter sakazakii).